A 161-amino-acid polypeptide reads, in one-letter code: Large ribosomal subunit protein uL16 (161 aa).

The disordered stretch occupies residues 140–161; the sequence is LNKGNYKPAKTPVTADDSESSS.

Belongs to the universal ribosomal protein uL16 family. Part of the 50S ribosomal subunit.

Its function is as follows. Binds 23S rRNA and is also seen to make contacts with the A and possibly P site tRNAs. This Prochlorococcus marinus (strain NATL1A) protein is Large ribosomal subunit protein uL16.